Reading from the N-terminus, the 145-residue chain is Small ribosomal subunit protein uS19 (145 aa).

At A2 the chain carries N-acetylalanine. Residue K108 forms a Glycyl lysine isopeptide (Lys-Gly) (interchain with G-Cter in SUMO2) linkage.

It belongs to the universal ribosomal protein uS19 family. In terms of assembly, component of the small ribosomal subunit.

It localises to the cytoplasm. Component of the small ribosomal subunit. The ribosome is a large ribonucleoprotein complex responsible for the synthesis of proteins in the cell. The protein is Small ribosomal subunit protein uS19 (RPS15) of Oryctolagus cuniculus (Rabbit).